The sequence spans 66 residues: DNA gyrase inhibitor YacG (66 aa).

Zn(2+) contacts are provided by Cys10, Cys13, Cys29, and Cys33. The segment at 46–66 (KRIPSDVQITDSDEWSDETRY) is disordered. A compositionally biased stretch (acidic residues) spans 56–66 (DSDEWSDETRY).

This sequence belongs to the DNA gyrase inhibitor YacG family. As to quaternary structure, interacts with GyrB. Requires Zn(2+) as cofactor.

Inhibits all the catalytic activities of DNA gyrase by preventing its interaction with DNA. Acts by binding directly to the C-terminal domain of GyrB, which probably disrupts DNA binding by the gyrase. This Sodalis glossinidius (strain morsitans) protein is DNA gyrase inhibitor YacG.